Consider the following 2382-residue polypeptide: MAAPSISPLFAPQMGVQRDFQDSEMQIATVNFPCTGQSNTSLANWLQQEEKSHLQLLQAAWSISLRSYTGSNDVLFSCLNTKDTAALGANSVVYVDEGNEDKYGSARRGNLREFDLAICFSKQNEANCPVIGIHHKPSVISTDFATMIAATVAKAIEEIVLHVDSLIASLDICSDADINCISRWNSPSDDGIPSAQCIHHIISQKCATQPESIAVSAWDGRLTYAELDGLSSSLAIRLQHLGVCQEIFVPLIFDKSKWAVIALLSVLKAGGAYFFLNPSNPIQYNLGLCSSLSPEVALCSPRHSTLAKSFAGTAIPVGEEHCELPESLPVDEKTPPCTAETTPSNAMYITFTSGTTGVPKGITTEHSAFYSMAMANGKALQVGPATRMLQFASYTFDVSNRDMLITLMFGGCICIPSELDRLNDLSGFINRQSVNLASLTPSLASTLNPALCPSLQGLVLGGESMNDSHISAWANHVRLFNAYGVSESAGIAALASDIQADYSPGNIGFGSGSTLWVVTIDQPDKLAPIGALGEMVIEGPSVARGYLGDKKRTEEQFTSTSKWKNRIRAQLSESRSSKRAFHTGDLVRYNLDGSLNFLGRKDHQVKIHGQRLELTAIEHHIAACLEVAESGFLHVAVVTAKNEGNGSVKLLAFLGLYTSRGSDSPSQLVSKKLEDVEALKVALRQHLLLCLPAFMVPVDFIFVQHMPLTTSGKINRLLLQEAAGHALLDDQKRNIDTSDLNGNQTPTTQNQRILIQSWAKALGIKSESIMRNDCFFRRGGDSIAAIKMAASLRQQELIISVSDVFKFSTFSDMASVLVKDHRPLQTAMLAPFSLIDNSQTVLDAVMEELGTGIDQIEDVYPCTHMQQGLIALTAQQPHSYIGRYTWQLAEMLDVEKFKNAWESAWLHNPILRTRIVQIPDGVFQVVVKTDMPWNTVTDISRGGDGKELREIDISNGPLIQFYLSKESFRLDIHHSLFDEWSLGLIMGQVERAYAGGGLRMQPFSPFVQHLLHERDTSLEDFWRQEFSGLQAEHFPAIASRPLSVEHPTEKVVLEHSVQLETGFSTKYTISSIVRLAWAIVLWHQTGSEDVVFGATVSGRNANIDGIDQLSGPTLATLPVRIKLAASQPIHEGLSQVQGQFVNMMVHEQAGLPRIRQVGREAAEACNFQNLLVVQPYEEQTESHMFKASANSASSSENAKSFASYPMVLICRPEKSGISMKAAFDPAILTPAAGHSILKQMSHVIQQLVTSDSTCIAAVSLVPPEDMATLRQWNHSLPNGVNTCIHARIQELCIGQPDTLAIHSQNLDLTYGQLDNYSDQFAQNLIGSGVKQGDFVPLFLERSPWVPVIMLAVLKTGAAFVLLDLSHPMQRLRTMCSMIDARIVVTSKEHADRSGNLLLPVIIFDPEAHAQNVSKQATAPELKPLTAVTTPDAPACVVFSSGSTGLPKGIVLPHSALTTSAAVMREYGMLGPKSRVFHFASFAFDISIGEILFTLAAGACVCVPHEEERKGNPAKAAGDLKVTWALLTPSVINLFDPSDVPTLEVLGSAGEPLTPQIVDTWAHRVKLYGMYAPAECTVISHIGRILPDTHHSNIGKSHGGVSWVVDPSDHNRLVPIGTVGELIVEGPTVSSGYLNDPAKTNEVFITSPSWLDEVRSHSGKMYKTGDLVRQTSEGSLEFVGRKDDQVKLHGQRLEVGEVEHCITSSCTAIKTATVECIKIREQNSRVSLVAFICPQTDEDWGQSLNDPSSEVGDLELISPPRDQFYSMIESLETSLRELLPAYMVPSFFVPLADVPLSLSGKVNRRLLRDQSTSWPMKRLGLYQLRRKSIPAEEVPVSIHGRKVQEIVGQALNLDPKSIPMNSNFFGLGGDSISAMQVSMLARRRGIRLTVADIFTQQTLSGLSLKCATENGDASQASKSRSLGRELPGSNIKSLHRCEIPRDKLPRQLPQEIADNIVEAMPATEFQTMTLHNFYSRYLWISLPERVNQEHLLNACDQLVQKHSVLRTVFYTNDDKSVVQLTLRKVPVNFVHYSNIENLEKHCADDSLAMGVPINSVPGFEVQLVTLRDSGMYLILRLPHAQFDGVSLDIICSDLSAAYSGDSLPPCAQFSDHIRHVWEKRIPESYNAWREVLGNVPMTSLNNKYLRNWGSASEMGSPNMGTDPDQPKVVTAMAETLPISPPPNITLATLVKLAWAITLSRLFTSIEEDDGASDDVVFGQVVHGRGLGISHEDRIVGPCLNIIPVRVHLPPRSNKLDLLGQVQQQHIQTMSVENLELGEITRNCTSWKAGTKFGSFIRFQNFTNNDDSTCSFDGSACETGLYSLPNRPSNTANVLVVPHGPTLSITMTISNQVLDRGSADFVAGYFSDVIESLASEETVCEYLE.

Positions 204-607 (QKCATQPESI…LGRKDHQVKI (404 aa)) are adenylation 1. The 77-residue stretch at 745-821 (TPTTQNQRIL…DMASVLVKDH (77 aa)) folds into the Carrier 1 domain. Ser-782 carries the post-translational modification O-(pantetheine 4'-phosphoryl)serine. The condensation 1 stretch occupies residues 857–1269 (EDVYPCTHMQ…LVPPEDMATL (413 aa)). Residues 1294-1687 (GQPDTLAIHS…VGRKDDQVKL (394 aa)) form an adenylation 2 region. The Carrier 2 domain occupies 1833-1909 (VPVSIHGRKV…GLSLKCATEN (77 aa)). Ser-1870 bears the O-(pantetheine 4'-phosphoryl)serine mark. The segment at 1967-2373 (MTLHNFYSRY…FSDVIESLAS (407 aa)) is condensation 2.

Belongs to the NRP synthetase family.

The protein operates within pigment biosynthesis. Functionally, nonribosomal peptide synthetase; part of the gene cluster that mediates the biosynthesis of the yellow pigment chrysogine. the NRPS chyA mediates the condensation of anthranilic acid and alanine into the intermediate 2-(2-aminopropanamido)benzoic acid. The remainder of the pathway is highly branched yielding at least 13 chrysogine-related compounds. The malonyl transferase chyE converts 2-(2-aminopropanamido)benzoic acid and 2-(2-aminopropanamido)benzamidine into 2-(2-(2-carboxyacetamido)propanamido)benzoic acid and 3-((1-((2-carbamoylphenyl)amino)-1-oxopropan-2-yl)amino)-3-oxopropanoic acid, respectively. ChyD is an amidase, being responsible for the amidation of the carboxylic acid moiety of 2-(2-aminopropanamido)benzoic acid, 2-(2-(2-carboxyacetamido)propanamido)benzoic acid and 2-(2-((4-amino-1-carboxy-4-oxobutyl)amino)propanamido)benzoic acid. ChyC is involved in the same reactions as ChyD, but plays a more minor role in the amidation reactions compared to chyD. The oxidoreductases chyH and chyM are involved in oxidation reactions that form N-pyruvoylanthranilamide from 2-(2-aminopropanamido)benzamidine and (1-((2-carbamoylphenyl)amino)-1-oxopropan-2-yl)glutamine, respectively. N-pyruvoylanthranilamide is further converted via two further branches in the pathway, yielding chrysogine and additional chrysogine-related coumpounds. Chrysogine is likely formed by a spontaneous ring closure from N-pyruvoylanthranilamide. The protein is Nonribosomal peptide synthetase chyA of Penicillium rubens (strain ATCC 28089 / DSM 1075 / NRRL 1951 / Wisconsin 54-1255) (Penicillium chrysogenum).